The primary structure comprises 450 residues: Tubulin beta chain (450 aa).

The GTP site is built by Glu69, Ser138, Gly142, Thr143, Gly144, Asn204, and Asn226. Residue Glu69 coordinates Mg(2+). Positions 427-450 (DATIDQEFEDEEEVEEQNDDSDEQ) are disordered. The segment covering 430-450 (IDQEFEDEEEVEEQNDDSDEQ) has biased composition (acidic residues).

Belongs to the tubulin family. In terms of assembly, dimer of alpha and beta chains. A typical microtubule is a hollow water-filled tube with an outer diameter of 25 nm and an inner diameter of 15 nM. Alpha-beta heterodimers associate head-to-tail to form protofilaments running lengthwise along the microtubule wall with the beta-tubulin subunit facing the microtubule plus end conferring a structural polarity. Microtubules usually have 13 protofilaments but different protofilament numbers can be found in some organisms and specialized cells. Mg(2+) is required as a cofactor.

The protein resides in the cytoplasm. The protein localises to the cytoskeleton. Tubulin is the major constituent of microtubules, a cylinder consisting of laterally associated linear protofilaments composed of alpha- and beta-tubulin heterodimers. Microtubules grow by the addition of GTP-tubulin dimers to the microtubule end, where a stabilizing cap forms. Below the cap, tubulin dimers are in GDP-bound state, owing to GTPase activity of alpha-tubulin. This is Tubulin beta chain from Bombyx mori (Silk moth).